A 179-amino-acid chain; its full sequence is MATVLFQKTNERYTDQNEVSAFLASRGVLYEQWDVSKLPAELVDTYTLTDADKQTILDTFQSEITDVSERRGYQTADIISLSDATPNLDELLVNFQKEHHHTDDEVRFIVSGHGVFAIQDDEVGYYNIELNPGDLISVPVNTRHYFTLQEDRKVVAVRIFVTTDGWVPIYEKDPIETAN.

Residues H99, H101, E105, and H144 each coordinate Fe(2+). H99, H101, E105, and H144 together coordinate Ni(2+).

This sequence belongs to the acireductone dioxygenase (ARD) family. Monomer. Requires Fe(2+) as cofactor. Ni(2+) is required as a cofactor.

The enzyme catalyses 1,2-dihydroxy-5-(methylsulfanyl)pent-1-en-3-one + O2 = 3-(methylsulfanyl)propanoate + CO + formate + 2 H(+). It carries out the reaction 1,2-dihydroxy-5-(methylsulfanyl)pent-1-en-3-one + O2 = 4-methylsulfanyl-2-oxobutanoate + formate + 2 H(+). It participates in amino-acid biosynthesis; L-methionine biosynthesis via salvage pathway; L-methionine from S-methyl-5-thio-alpha-D-ribose 1-phosphate: step 5/6. Functionally, catalyzes 2 different reactions between oxygen and the acireductone 1,2-dihydroxy-3-keto-5-methylthiopentene (DHK-MTPene) depending upon the metal bound in the active site. Fe-containing acireductone dioxygenase (Fe-ARD) produces formate and 2-keto-4-methylthiobutyrate (KMTB), the alpha-ketoacid precursor of methionine in the methionine recycle pathway. Ni-containing acireductone dioxygenase (Ni-ARD) produces methylthiopropionate, carbon monoxide and formate, and does not lie on the methionine recycle pathway. The chain is Acireductone dioxygenase from Exiguobacterium sibiricum (strain DSM 17290 / CCUG 55495 / CIP 109462 / JCM 13490 / 255-15).